The sequence spans 430 residues: Mothers against decapentaplegic homolog 9 (430 aa).

In terms of domain architecture, MH1 spans 16-140; it reads PAVKRLLGWK…YRRVETPVLP (125 aa). Positions 68, 113, 125, and 130 each coordinate Zn(2+). Positions 186–222 are disordered; sequence CPAPPSSPGHVFPQSPCPTSYPHSPGSPSESDSPYQH. Positions 202–221 are enriched in polar residues; sequence CPTSYPHSPGSPSESDSPYQ. In terms of domain architecture, MH2 spans 236 to 430; the sequence is WCSVAYYELN…SPHNPISSVS (195 aa).

It belongs to the dwarfin/SMAD family. In terms of assembly, interaction with the co-SMAD SMAD4. Interacts with PEBP2-alpha subunit. Interacts with RANBP3L. Phosphorylated on serine by BMP (bone morphogenetic proteins) type 1 receptor kinase and activin type I receptor-like kinases (ALK-2, ALK-3 and ALK-6).

The protein localises to the cytoplasm. The protein resides in the nucleus. Its function is as follows. Transcriptional modulator activated by BMP (bone morphogenetic proteins) type 1 receptor kinase. SMAD9 is a receptor-regulated SMAD (R-SMAD). Has been shown to be activated by activin type I receptor-like kinases (ALK-2, ALK-3, ALK-6) which stimulate heteromerization between SMAD9 and SMAD4. May play a role in osteoblast differentiation and maturation. In Mus musculus (Mouse), this protein is Mothers against decapentaplegic homolog 9 (Smad9).